The following is a 314-amino-acid chain: Ribosomal protein L11 methyltransferase (314 aa).

Residues Thr-161, Gly-182, Asp-204, and Asn-248 each contribute to the S-adenosyl-L-methionine site.

It belongs to the methyltransferase superfamily. PrmA family.

The protein resides in the cytoplasm. The enzyme catalyses L-lysyl-[protein] + 3 S-adenosyl-L-methionine = N(6),N(6),N(6)-trimethyl-L-lysyl-[protein] + 3 S-adenosyl-L-homocysteine + 3 H(+). In terms of biological role, methylates ribosomal protein L11. The polypeptide is Ribosomal protein L11 methyltransferase (Listeria welshimeri serovar 6b (strain ATCC 35897 / DSM 20650 / CCUG 15529 / CIP 8149 / NCTC 11857 / SLCC 5334 / V8)).